The sequence spans 224 residues: BOS complex subunit TMEM147 (224 aa).

Residues 1–21 traverse the membrane as a helical segment; that stretch reads MTLFHFGNCFALAYFPYFITY. Residues 22–34 lie on the Cytoplasmic side of the membrane; that stretch reads KCSGLSEYNAFWK. A helical membrane pass occupies residues 35–58; the sequence is CVQAGVTYLFVQLCKMLFLATFFP. The Lumenal portion of the chain corresponds to 59–66; sequence TWEGGIYD. The helical transmembrane segment at 67 to 88 threads the bilayer; that stretch reads FIGEFMKASVDVADLIGLNLVM. Over 89–98 the chain is Cytoplasmic; it reads SRNAGKGEYK. Residues 99–124 traverse the membrane as a helical segment; the sequence is IMVAALGWATAELIMSRCIPLWVGAR. Residues 125–129 are Lumenal-facing; that stretch reads GIEFD. The helical transmembrane segment at 130 to 155 threads the bilayer; the sequence is WKYIQMSIDSNISLVHYIVASAQVWM. Residues 156–164 lie on the Cytoplasmic side of the membrane; the sequence is ITRYDLYHT. The chain crosses the membrane as a helical span at residues 165-187; it reads FRPAVLLLMFLSVYKAFVMETFV. The Lumenal portion of the chain corresponds to 188-194; it reads HLCSLGS. Residues 195 to 216 form a helical membrane-spanning segment; that stretch reads WAALLARAVVTGLLALSTLALY. The Cytoplasmic segment spans residues 217–224; it reads VAVVNVHS.

Belongs to the TMEM147 family. In terms of assembly, component of the back of Sec61 (BOS) complex, composed of NCLN/Nicalin, NOMO (NOMO1, NOMO2 or NOMO3) and TMEM147. The BOS complex is part of the multi-pass translocon (MPT) complex, composed of three subcomplexes, the GEL complex (composed of RAB5IF/OPTI and TMCO1), the BOS complex (composed of NCLN/Nicalin, NOMO and TMEM147) and the PAT complex (composed of WDR83OS/Asterix and CCDC47). The MPT complex associates with the SEC61 complex. Interacts with CHRM3, CHRM1 and AVPR2. Interacts with LBR; promoting LBR localization to the nucleus inner membrane. Interacts with DHCR7.

The protein localises to the endoplasmic reticulum membrane. It localises to the nucleus membrane. It is found in the cell membrane. Functionally, component of the multi-pass translocon (MPT) complex that mediates insertion of multi-pass membrane proteins into the lipid bilayer of membranes. The MPT complex takes over after the SEC61 complex: following membrane insertion of the first few transmembrane segments of proteins by the SEC61 complex, the MPT complex occludes the lateral gate of the SEC61 complex to promote insertion of subsequent transmembrane regions. Also acts as a negative regulator of CHRM3 function, most likely by interfering with its trafficking to the cell membrane. Negatively regulates CHRM3-mediated calcium mobilization and activation of RPS6KA1/p90RSK activity. Regulates LBR localization to the nucleus inner membrane. The chain is BOS complex subunit TMEM147 from Homo sapiens (Human).